The following is a 160-amino-acid chain: Large ribosomal subunit protein uL16 (160 aa).

A disordered region spans residues 138 to 160; it reads KNLENSSQENTKDSKKSQEEVKQ. The segment covering 147–160 has biased composition (basic and acidic residues); it reads NTKDSKKSQEEVKQ.

This sequence belongs to the universal ribosomal protein uL16 family. As to quaternary structure, part of the 50S ribosomal subunit.

Binds 23S rRNA and is also seen to make contacts with the A and possibly P site tRNAs. The sequence is that of Large ribosomal subunit protein uL16 from Prochlorococcus marinus (strain AS9601).